A 375-amino-acid chain; its full sequence is 23S rRNA (uracil(747)-C(5))-methyltransferase RlmC (375 aa).

[4Fe-4S] cluster is bound by residues Cys3, Cys11, Cys14, and Cys87. S-adenosyl-L-methionine is bound by residues Gln212, Phe241, Glu262, and Asn307. Catalysis depends on Cys334, which acts as the Nucleophile.

The protein belongs to the class I-like SAM-binding methyltransferase superfamily. RNA M5U methyltransferase family. RlmC subfamily.

It catalyses the reaction uridine(747) in 23S rRNA + S-adenosyl-L-methionine = 5-methyluridine(747) in 23S rRNA + S-adenosyl-L-homocysteine + H(+). Functionally, catalyzes the formation of 5-methyl-uridine at position 747 (m5U747) in 23S rRNA. The sequence is that of 23S rRNA (uracil(747)-C(5))-methyltransferase RlmC from Shigella sonnei (strain Ss046).